The following is a 173-amino-acid chain: tRNA-specific adenosine deaminase (173 aa).

Residues Glu9 to Arg121 form the CMP/dCMP-type deaminase domain. His61 is a Zn(2+) binding site. Glu63 (proton donor) is an active-site residue. Cys91 and Cys94 together coordinate Zn(2+).

This sequence belongs to the cytidine and deoxycytidylate deaminase family. Homodimer. Zn(2+) serves as cofactor.

It catalyses the reaction adenosine(34) in tRNA + H2O + H(+) = inosine(34) in tRNA + NH4(+). Functionally, catalyzes the deamination of adenosine to inosine at the wobble position 34 of tRNA(Arg2). The protein is tRNA-specific adenosine deaminase of Haemophilus influenzae (strain ATCC 51907 / DSM 11121 / KW20 / Rd).